The chain runs to 212 residues: Uracil phosphoribosyltransferase (212 aa).

Residues Arg78, Arg103, and 130–138 each bind 5-phospho-alpha-D-ribose 1-diphosphate; that span reads DPMLATGSS. Uracil-binding positions include Ile193 and 198–200; that span reads GDA. Asp199 provides a ligand contact to 5-phospho-alpha-D-ribose 1-diphosphate.

It belongs to the UPRTase family. Mg(2+) is required as a cofactor.

It catalyses the reaction UMP + diphosphate = 5-phospho-alpha-D-ribose 1-diphosphate + uracil. Its pathway is pyrimidine metabolism; UMP biosynthesis via salvage pathway; UMP from uracil: step 1/1. Its activity is regulated as follows. Allosterically activated by GTP. In terms of biological role, catalyzes the conversion of uracil and 5-phospho-alpha-D-ribose 1-diphosphate (PRPP) to UMP and diphosphate. The polypeptide is Uracil phosphoribosyltransferase (Pseudomonas fluorescens (strain SBW25)).